The following is a 107-amino-acid chain: Quaternary ammonium compound-resistance protein QacC (107 aa).

3 consecutive transmembrane segments (helical) span residues 26-46 (FSKFIPSLGTIISFGICFYFL), 57-77 (ITYATWAGLGLVLTTVVSIII), and 84-104 (LITIVSIVLIIVGVVSLNIFG).

The protein belongs to the drug/metabolite transporter (DMT) superfamily. Small multidrug resistance (SMR) (TC 2.A.7.1) family.

It is found in the cell membrane. Multidrug exporter. Is implicated for the resistance to bacteriocidal quaternary ammonium compounds. The chain is Quaternary ammonium compound-resistance protein QacC from Staphylococcus sp. (strain ST827).